The chain runs to 324 residues: Fructose-1,6-bisphosphatase class 1 (324 aa).

Residues Glu-88, Asp-107, Leu-109, and Asp-110 each contribute to the Mg(2+) site. Substrate is bound by residues 110–113 (DGSS), Asn-199, and Lys-265. Glu-271 is a binding site for Mg(2+).

It belongs to the FBPase class 1 family. Homotetramer. The cofactor is Mg(2+).

The protein localises to the cytoplasm. The enzyme catalyses beta-D-fructose 1,6-bisphosphate + H2O = beta-D-fructose 6-phosphate + phosphate. It functions in the pathway carbohydrate biosynthesis; gluconeogenesis. The sequence is that of Fructose-1,6-bisphosphatase class 1 from Neisseria meningitidis serogroup B (strain ATCC BAA-335 / MC58).